We begin with the raw amino-acid sequence, 332 residues long: Ornithine carbamoyltransferase 1, catabolic (332 aa).

Carbamoyl phosphate-binding positions include 56-59 (STRT), Gln-83, Arg-107, and 134-137 (HPTQ). L-ornithine-binding positions include Asn-167, Asp-231, and 235 to 236 (SM). Carbamoyl phosphate-binding positions include 273–274 (CL) and Arg-318.

The protein belongs to the aspartate/ornithine carbamoyltransferase superfamily. OTCase family.

It is found in the cytoplasm. The catalysed reaction is carbamoyl phosphate + L-ornithine = L-citrulline + phosphate + H(+). It participates in amino-acid degradation; L-arginine degradation via ADI pathway; carbamoyl phosphate from L-arginine: step 2/2. Its function is as follows. Reversibly catalyzes the transfer of the carbamoyl group from carbamoyl phosphate (CP) to the N(epsilon) atom of ornithine (ORN) to produce L-citrulline. The protein is Ornithine carbamoyltransferase 1, catabolic (arcB1) of Staphylococcus epidermidis (strain ATCC 12228 / FDA PCI 1200).